A 247-amino-acid chain; its full sequence is Small ribosomal subunit protein eS6 (247 aa).

The disordered stretch occupies residues 194-247; the sequence is ALKKKRVTKKREDHAEYTKLLAQRMKEAKERKMERKRSNSRSKGDSIRESTSKK. Residues 217-247 show a composition bias toward basic and acidic residues; the sequence is RMKEAKERKMERKRSNSRSKGDSIRESTSKK.

This sequence belongs to the eukaryotic ribosomal protein eS6 family. Ribosomal protein S6 is the major substrate of protein kinases in eukaryote ribosomes.

Component of the 40S small ribosomal subunit. Plays an important role in controlling cell growth and proliferation through the selective translation of particular classes of mRNA. The polypeptide is Small ribosomal subunit protein eS6 (RPS6) (Aplysia californica (California sea hare)).